Reading from the N-terminus, the 449-residue chain is MSHITFDYSKVLESFAGQHEIDFLQGQVTEADKLLREGTGPGSDFLGWLDLPENYDKDEFARILTAAEKIKSDSEVLVVIGIGGSYLGAKAAIDFLNHHFANLQTAKERKAPQILYAGNSISSTYLADLVEYVQDKEFSVNVISKSGTTTEPAIAFRVFKELLVKKYGQEEANKRIYATTDKVKGAVKVEADANNWETFVVPDNVGGRFSVLTAVGLLPIAASGADITALMEGANAARKDLSSDKISENIAYQYAAVRNVLYRKGYITEILANYEPSLQYFGEWWKQLAGESEGKDQKGIYPTSANFSTDLHSLGQFIQEGYRNLFETVIRVDKPRKNVIIPELAEDLDGLGYLQGKDVDFVNKKATDGVLLAHTDGGVPNMFVTLPAQDEFTLGYTIYFFELAIAVSGYMNAVNPFDQPGVEAYKRNMFALLGKPGFEELSAELNARL.

Glu-291 serves as the catalytic Proton donor. Residues His-312 and Lys-426 contribute to the active site.

It belongs to the GPI family.

The protein resides in the cytoplasm. It catalyses the reaction alpha-D-glucose 6-phosphate = beta-D-fructose 6-phosphate. Its pathway is carbohydrate biosynthesis; gluconeogenesis. It participates in carbohydrate degradation; glycolysis; D-glyceraldehyde 3-phosphate and glycerone phosphate from D-glucose: step 2/4. Catalyzes the reversible isomerization of glucose-6-phosphate to fructose-6-phosphate. The polypeptide is Glucose-6-phosphate isomerase (Streptococcus pyogenes serotype M4 (strain MGAS10750)).